Consider the following 234-residue polypeptide: UPF0502 protein Bphyt_5265 (234 aa).

It belongs to the UPF0502 family.

The chain is UPF0502 protein Bphyt_5265 from Paraburkholderia phytofirmans (strain DSM 17436 / LMG 22146 / PsJN) (Burkholderia phytofirmans).